The sequence spans 408 residues: Acetate kinase (408 aa).

Residue Asn-7 coordinates Mg(2+). Lys-14 is an ATP binding site. Arg-91 provides a ligand contact to substrate. The Proton donor/acceptor role is filled by Asp-148. ATP-binding positions include 208 to 212 (HLGNG), 283 to 285 (DFR), and 331 to 335 (GIGEN). Residue Glu-384 participates in Mg(2+) binding.

This sequence belongs to the acetokinase family. As to quaternary structure, homodimer. Requires Mg(2+) as cofactor. It depends on Mn(2+) as a cofactor.

It localises to the cytoplasm. The enzyme catalyses acetate + ATP = acetyl phosphate + ADP. Its pathway is metabolic intermediate biosynthesis; acetyl-CoA biosynthesis; acetyl-CoA from acetate: step 1/2. In terms of biological role, catalyzes the formation of acetyl phosphate from acetate and ATP. Can also catalyze the reverse reaction. The chain is Acetate kinase from Methanosarcina mazei (strain ATCC BAA-159 / DSM 3647 / Goe1 / Go1 / JCM 11833 / OCM 88) (Methanosarcina frisia).